Here is a 200-residue protein sequence, read N- to C-terminus: Ubiquitin-conjugating enzyme E2 K (200 aa).

A2 is modified (N-acetylalanine). The region spanning 4–154 (IAVQRIKREF…ARLWAHVYAG (151 aa)) is the UBC core domain. K14 bears the N6-acetyllysine; alternate mark. K14 is covalently cross-linked (Glycyl lysine isopeptide (Lys-Gly) (interchain with G-Cter in SUMO); alternate). K14 is covalently cross-linked (Glycyl lysine isopeptide (Lys-Gly) (interchain with G-Cter in SUMO1); alternate). The Glycyl thioester intermediate role is filled by C92. Position 159 is a phosphoserine (S159). Positions 160–200 (PEYTKKIENLCAMGFDRNAVIVALSSKSWDVETATELLLSN) constitute a UBA domain.

It belongs to the ubiquitin-conjugating enzyme family. In terms of assembly, interacts with RNF138/NARF. Interacts with BRCA1. Post-translationally, sumoylation at Lys-14 impairs catalytic activity.

Its subcellular location is the cytoplasm. The catalysed reaction is S-ubiquitinyl-[E1 ubiquitin-activating enzyme]-L-cysteine + [E2 ubiquitin-conjugating enzyme]-L-cysteine = [E1 ubiquitin-activating enzyme]-L-cysteine + S-ubiquitinyl-[E2 ubiquitin-conjugating enzyme]-L-cysteine.. Its pathway is protein modification; protein ubiquitination. Its function is as follows. Accepts ubiquitin from the E1 complex and catalyzes its covalent attachment to other proteins. In vitro, in the presence or in the absence of BRCA1-BARD1 E3 ubiquitin-protein ligase complex, catalyzes the synthesis of 'Lys-48'-linked polyubiquitin chains. Does not transfer ubiquitin directly to but elongates monoubiquitinated substrate protein. Mediates the selective degradation of short-lived and abnormal proteins, such as the endoplasmic reticulum-associated degradation (ERAD) of misfolded lumenal proteins. Ubiquitinates huntingtin. May mediate foam cell formation by the suppression of apoptosis of lipid-bearing macrophages through ubiquitination and subsequence degradation of p53/TP53. Proposed to be involved in ubiquitination and proteolytic processing of NF-kappa-B; in vitro supports ubiquitination of NFKB1. The sequence is that of Ubiquitin-conjugating enzyme E2 K (UBE2K) from Bos taurus (Bovine).